The chain runs to 101 residues: Cilia- and flagella-associated protein 141 (101 aa).

Microtubule inner protein component of sperm flagellar doublet microtubules.

The protein localises to the cytoplasm. It is found in the cytoskeleton. The protein resides in the cilium axoneme. It localises to the flagellum axoneme. Its function is as follows. Microtubule inner protein (MIP) part of the dynein-decorated doublet microtubules (DMTs) in cilia axoneme, which is required for motile cilia beating. In Mus musculus (Mouse), this protein is Cilia- and flagella-associated protein 141.